The chain runs to 741 residues: Condensin complex subunit 2 (741 aa).

Residues 1 to 67 (MGPPGPALPA…NDDEKERLQR (67 aa)) are disordered. A phosphoserine mark is found at S15, S25, and S28. T49 is modified (phosphothreonine). S70, S78, S81, S87, S89, S92, S96, S201, and S233 each carry phosphoserine. Acidic residues predominate over residues 361-377 (CGDFPDGSLGDDFDAND). Residues 361–383 (CGDFPDGSLGDDFDANDEPDHTA) are disordered. S432 carries the phosphoserine modification. Residues 447-467 (FRPRRKQDAPSQSENKKKSTK) are disordered. Residue K488 forms a Glycyl lysine isopeptide (Lys-Gly) (interchain with G-Cter in SUMO2) linkage. S496 is subject to Phosphoserine. Phosphothreonine occurs at positions 598 and 605. K637 carries the N6-acetyllysine modification.

The protein belongs to the CND2 (condensin subunit 2) family. Component of the condensin complex, which contains the SMC2 and SMC4 heterodimer, and three non SMC subunits that probably regulate the complex: NCAPH/BRRN1, NCAPD2/CAPD2 and NCAPG. Phosphorylated by CDK1. Its phosphorylation, as well as that of NCAPD2 and NCAPG subunits, activates the condensin complex and is required for chromosome condensation. Widely expressed at low level. Expressed in proliferating cells.

It is found in the nucleus. Its subcellular location is the cytoplasm. It localises to the chromosome. In terms of biological role, regulatory subunit of the condensin complex, a complex required for conversion of interphase chromatin into mitotic-like condense chromosomes. The condensin complex probably introduces positive supercoils into relaxed DNA in the presence of type I topoisomerases and converts nicked DNA into positive knotted forms in the presence of type II topoisomerases. Early in neurogenesis, may play an essential role to ensure accurate mitotic chromosome condensation in neuron stem cells, ultimately affecting neuron pool and cortex size. This is Condensin complex subunit 2 from Homo sapiens (Human).